Consider the following 281-residue polypeptide: Nucleotide-binding protein MADE_1004170 (281 aa).

8–15 (GRSGSGKS) serves as a coordination point for ATP. 56-59 (DVRN) is a binding site for GTP.

It belongs to the RapZ-like family.

Functionally, displays ATPase and GTPase activities. The chain is Nucleotide-binding protein MADE_1004170 from Alteromonas mediterranea (strain DSM 17117 / CIP 110805 / LMG 28347 / Deep ecotype).